The chain runs to 756 residues: ATP-dependent 6-phosphofructokinase 2 (756 aa).

Residues 1–393 (MEQKFKKGKD…KQTYLNFVSI (393 aa)) are N-terminal catalytic PFK domain 1. Residues G20, 81–82 (RC), and 111–114 (GDGS) each bind ATP. D112 contributes to the Mg(2+) binding site. Residues 157–159 (SID), R194, 201–203 (MGR), E257, R285, and 291–294 (HLQR) contribute to the substrate site. The active-site Proton acceptor is D159. The segment at 394-404 (PLSTTMPSRTK) is interdomain linker. Residues 405 to 756 (TFAVVHIGSP…KKPQEAVLSS (352 aa)) form a C-terminal regulatory PFK domain 2 region. Beta-D-fructose 2,6-bisphosphate contacts are provided by residues R474, 530–534 (TISNN), 575–577 (MGS), E632, R658, and 664–667 (YSQL).

This sequence belongs to the phosphofructokinase type A (PFKA) family. ATP-dependent PFK group I subfamily. Eukaryotic two domain clade 'E' sub-subfamily. As to quaternary structure, homotetramer. Mg(2+) is required as a cofactor.

The protein localises to the cytoplasm. It carries out the reaction beta-D-fructose 6-phosphate + ATP = beta-D-fructose 1,6-bisphosphate + ADP + H(+). Its pathway is carbohydrate degradation; glycolysis; D-glyceraldehyde 3-phosphate and glycerone phosphate from D-glucose: step 3/4. Its activity is regulated as follows. Allosterically activated by ADP, AMP, or fructose 2,6-bisphosphate, and allosterically inhibited by ATP or citrate. In terms of biological role, catalyzes the phosphorylation of D-fructose 6-phosphate to fructose 1,6-bisphosphate by ATP, the first committing step of glycolysis. The chain is ATP-dependent 6-phosphofructokinase 2 from Caenorhabditis elegans.